Here is a 289-residue protein sequence, read N- to C-terminus: Cbb3-type cytochrome c oxidase subunit FixP (289 aa).

Topologically, residues 1–33 (MADKHKHVDEVSGVETTGHEWDGIRELNNPLPR) are cytoplasmic. A helical transmembrane segment spans residues 34–56 (WWVYSFYATIIWAIGYAVAYPSW). Residues 57-289 (PMLTEATKGV…VFVHSLGGGE (233 aa)) are Periplasmic-facing. Cytochrome c domains lie at 110 to 198 (FAVS…MSLT) and 205 to 286 (HLVE…HSLG). Cys-123, Cys-126, His-127, Met-175, Cys-218, Cys-221, His-222, and Met-263 together coordinate heme c.

The protein belongs to the CcoP / FixP family. In terms of assembly, component of the cbb3-type cytochrome c oxidase at least composed of FixN, FixO, FixQ and FixP. The cofactor is heme c.

It localises to the cell inner membrane. Its pathway is energy metabolism; oxidative phosphorylation. Functionally, C-type cytochrome. Part of the cbb3-type cytochrome c oxidase complex. FixP subunit is required for transferring electrons from donor cytochrome c via its heme groups to FixO subunit. From there, electrons are shuttled to the catalytic binuclear center of FixN subunit where oxygen reduction takes place. The complex also functions as a proton pump. The polypeptide is Cbb3-type cytochrome c oxidase subunit FixP (Sinorhizobium medicae (strain WSM419) (Ensifer medicae)).